Here is a 481-residue protein sequence, read N- to C-terminus: Glutamyl-tRNA(Gln) amidotransferase subunit A (481 aa).

Active-site charge relay system residues include Lys-76 and Ser-151. The active-site Acyl-ester intermediate is the Ser-175.

The protein belongs to the amidase family. GatA subfamily. In terms of assembly, heterotrimer of A, B and C subunits.

It carries out the reaction L-glutamyl-tRNA(Gln) + L-glutamine + ATP + H2O = L-glutaminyl-tRNA(Gln) + L-glutamate + ADP + phosphate + H(+). Functionally, allows the formation of correctly charged Gln-tRNA(Gln) through the transamidation of misacylated Glu-tRNA(Gln) in organisms which lack glutaminyl-tRNA synthetase. The reaction takes place in the presence of glutamine and ATP through an activated gamma-phospho-Glu-tRNA(Gln). The polypeptide is Glutamyl-tRNA(Gln) amidotransferase subunit A (Chlorobaculum tepidum (strain ATCC 49652 / DSM 12025 / NBRC 103806 / TLS) (Chlorobium tepidum)).